Reading from the N-terminus, the 169-residue chain is Transcription antitermination protein NusB (169 aa).

The disordered stretch occupies residues 1–20; the sequence is MAESSNKPFRGPVRANDRKA.

This sequence belongs to the NusB family.

Functionally, involved in transcription antitermination. Required for transcription of ribosomal RNA (rRNA) genes. Binds specifically to the boxA antiterminator sequence of the ribosomal RNA (rrn) operons. This chain is Transcription antitermination protein NusB, found in Bradyrhizobium sp. (strain BTAi1 / ATCC BAA-1182).